A 1679-amino-acid chain; its full sequence is GRIP and coiled-coil domain-containing protein 2 (1679 aa).

Methionine 1 is subject to N-acetylmethionine. 2 disordered regions span residues 1–23 (MEDS…KLET) and 1466–1522 (LKSE…SAGT). Residues 35-1469 (KQMMLLQKAK…ETQLFQLKSE (1435 aa)) are a coiled coil. Residues serine 1474 and serine 1478 each carry the phosphoserine modification. The segment covering 1474-1483 (SPASSHQPSK) has biased composition (polar residues). The interval 1569–1608 (HLNGLLRETEATNAILMEQIKLLKSEIRRLERNQEREKSV) is mediates interaction with RAB6A. The segment at 1569–1679 (HLNGLLRETE…SYLHSWSGLR (111 aa)) is mediates interaction with RAB9A. The GRIP domain occupies 1604–1654 (REKSVANLEYLKNVLLRFIFLKPGSERERLLPVIDTMLQLSPEEKGKLATV).

As to quaternary structure, homodimer. Interacts (via GRIP domain) with RAB6A (preferentially in its GTP-bound form). May interact (RAB6A-dependent) with ARL1; might be involved in GCC2 Golgi localization. Interacts with CLASP1 and CLASP2; recruits both proteins to membranes of the TGN. Interacts with STX16. Interacts (probably via GRIP domain) with RAB9A (preferentially in its GTP-bound form).

The protein resides in the cytoplasm. It is found in the golgi apparatus. It localises to the trans-Golgi network membrane. In terms of biological role, golgin which probably tethers transport vesicles to the trans-Golgi network (TGN) and regulates vesicular transport between the endosomes and the Golgi. As a RAB9A effector it is involved in recycling of the mannose 6-phosphate receptor from the late endosomes to the TGN. May also play a role in transport between the recycling endosomes and the Golgi. Required for maintenance of the Golgi structure, it is involved in the biogenesis of noncentrosomal, Golgi-associated microtubules through recruitment of CLASP1 and CLASP2. In Rattus norvegicus (Rat), this protein is GRIP and coiled-coil domain-containing protein 2 (Gcc2).